A 534-amino-acid polypeptide reads, in one-letter code: MTKYIFVTGGVVSSIGKGIVAASLGRLLKNRGLKVTIQKFDPYINIDPGTMSPYQHGEVYVTDDGAETDLDLGHYERFIDINLNKYSNVTTGKIYSEVLRKERKGEYLGATVQVIPHITDALKDKIKRAATTTDSDVVITEVGGTVGDIESLPFLEALRQMKADVGSDNVMYIHTTLLPYLKAAGEMKTKPTQHSVKELRGLGIQPNMLVIRTEEPAGQGIKNKLAQFCDVAPEAVIESLDVEHIYQVPLNMQAQGMDQIVCDHLKLNAPAADMTEWSAMVDKVLNLKKTTKIALVGKYVELHDAYLSVVEALKHSGLANDTAIDIDWVNANDLTAENVASRLADADGIIVPGGFGQRGTEGKIQAIRYARENDVPMLGVCLGMQLTCIEFARHVLHLDGANSAELDPETQYPIIDIMRDQIDIEDMGGTLRLGLYPCKLKPGSKAAAAYGNQEVVQRRHRHRYEFNTKFREQFEAEGFVFSGVSPDNRLMEVVELPDKKFFVAAQYHPEYHSRPNHAEELYSAFVTAAVENAK.

Residues 1-267 (MTKYIFVTGG…DQIVCDHLKL (267 aa)) form an amidoligase domain region. S13 provides a ligand contact to CTP. S13 lines the UTP pocket. An ATP-binding site is contributed by 14 to 19 (SIGKGI). Y54 is a binding site for L-glutamine. D71 provides a ligand contact to ATP. Residues D71 and E141 each coordinate Mg(2+). CTP is bound by residues 148 to 150 (DIE), 188 to 193 (KTKPTQ), and K224. UTP contacts are provided by residues 188-193 (KTKPTQ) and K224. The region spanning 292–534 (KIALVGKYVE…FVTAAVENAK (243 aa)) is the Glutamine amidotransferase type-1 domain. L-glutamine is bound at residue G354. C381 serves as the catalytic Nucleophile; for glutamine hydrolysis. L-glutamine-binding positions include 382–385 (LGMQ), E405, and R463. Residues H508 and E510 contribute to the active site.

Belongs to the CTP synthase family. In terms of assembly, homotetramer.

The catalysed reaction is UTP + L-glutamine + ATP + H2O = CTP + L-glutamate + ADP + phosphate + 2 H(+). The enzyme catalyses L-glutamine + H2O = L-glutamate + NH4(+). It carries out the reaction UTP + NH4(+) + ATP = CTP + ADP + phosphate + 2 H(+). It participates in pyrimidine metabolism; CTP biosynthesis via de novo pathway; CTP from UDP: step 2/2. Allosterically activated by GTP, when glutamine is the substrate; GTP has no effect on the reaction when ammonia is the substrate. The allosteric effector GTP functions by stabilizing the protein conformation that binds the tetrahedral intermediate(s) formed during glutamine hydrolysis. Inhibited by the product CTP, via allosteric rather than competitive inhibition. In terms of biological role, catalyzes the ATP-dependent amination of UTP to CTP with either L-glutamine or ammonia as the source of nitrogen. Regulates intracellular CTP levels through interactions with the four ribonucleotide triphosphates. This is CTP synthase from Streptococcus thermophilus (strain ATCC BAA-250 / LMG 18311).